A 279-amino-acid polypeptide reads, in one-letter code: Thymidylate synthase (279 aa).

Residue 141–142 (RR) participates in dUMP binding. Cysteine 161 serves as the catalytic Nucleophile. DUMP-binding positions include 181–184 (RSND), asparagine 192, and 222–224 (HIY). (6R)-5,10-methylene-5,6,7,8-tetrahydrofolate is bound at residue aspartate 184. Position 278 (alanine 278) interacts with (6R)-5,10-methylene-5,6,7,8-tetrahydrofolate.

The protein belongs to the thymidylate synthase family. Bacterial-type ThyA subfamily. In terms of assembly, homodimer.

It is found in the cytoplasm. The catalysed reaction is dUMP + (6R)-5,10-methylene-5,6,7,8-tetrahydrofolate = 7,8-dihydrofolate + dTMP. It participates in pyrimidine metabolism; dTTP biosynthesis. Functionally, catalyzes the reductive methylation of 2'-deoxyuridine-5'-monophosphate (dUMP) to 2'-deoxythymidine-5'-monophosphate (dTMP) while utilizing 5,10-methylenetetrahydrofolate (mTHF) as the methyl donor and reductant in the reaction, yielding dihydrofolate (DHF) as a by-product. This enzymatic reaction provides an intracellular de novo source of dTMP, an essential precursor for DNA biosynthesis. This Bacillus licheniformis (strain ATCC 14580 / DSM 13 / JCM 2505 / CCUG 7422 / NBRC 12200 / NCIMB 9375 / NCTC 10341 / NRRL NRS-1264 / Gibson 46) protein is Thymidylate synthase.